The chain runs to 158 residues: Major latex protein 22 (158 aa).

Belongs to the MLP family. In terms of tissue distribution, laticifer.

Its subcellular location is the vacuole. It localises to the cytoplasmic vesicle. In terms of biological role, not known; MLPs constitute up to 50% of the soluble latex protein. The protein is Major latex protein 22 (MLP22) of Papaver somniferum (Opium poppy).